Reading from the N-terminus, the 229-residue chain is Ribosomal RNA large subunit methyltransferase E (229 aa).

Residues 1 to 20 form a disordered region; the sequence is MSRAGNGGRQRIKTAKGRSA. Residues Gly75, Trp77, Asp94, Asp110, and Asp134 each coordinate S-adenosyl-L-methionine. Lys174 (proton acceptor) is an active-site residue.

Belongs to the class I-like SAM-binding methyltransferase superfamily. RNA methyltransferase RlmE family.

The protein resides in the cytoplasm. It carries out the reaction uridine(2552) in 23S rRNA + S-adenosyl-L-methionine = 2'-O-methyluridine(2552) in 23S rRNA + S-adenosyl-L-homocysteine + H(+). Functionally, specifically methylates the uridine in position 2552 of 23S rRNA at the 2'-O position of the ribose in the fully assembled 50S ribosomal subunit. The chain is Ribosomal RNA large subunit methyltransferase E from Rhizorhabdus wittichii (strain DSM 6014 / CCUG 31198 / JCM 15750 / NBRC 105917 / EY 4224 / RW1) (Sphingomonas wittichii).